We begin with the raw amino-acid sequence, 258 residues long: Phosphosulfolactate synthase (258 aa).

Belongs to the phosphosulfolactate synthase family.

It catalyses the reaction (2R)-O-phospho-3-sulfolactate = phosphoenolpyruvate + sulfite + H(+). It participates in cofactor biosynthesis; coenzyme M biosynthesis; sulfoacetaldehyde from phosphoenolpyruvate and sulfite: step 1/4. In terms of biological role, catalyzes the addition of sulfite to phosphoenolpyruvate (PEP) to yield (2R)-phospho-3-sulfolactate (PSL). This is Phosphosulfolactate synthase (comA) from Methanothermobacter thermautotrophicus (strain ATCC 29096 / DSM 1053 / JCM 10044 / NBRC 100330 / Delta H) (Methanobacterium thermoautotrophicum).